The following is a 395-amino-acid chain: Tyrosine--tRNA ligase 2 (395 aa).

Residues 42 to 51 (PTAPDIHLGH) carry the 'HIGH' region motif. The 'KMSKS' region signature appears at 226–230 (KMSKS). Residue lysine 229 participates in ATP binding. Residues 334–394 (TPVANLLKDA…GKRKFARITI (61 aa)) enclose the S4 RNA-binding domain.

This sequence belongs to the class-I aminoacyl-tRNA synthetase family. TyrS type 2 subfamily. In terms of assembly, homodimer.

Its subcellular location is the cytoplasm. It catalyses the reaction tRNA(Tyr) + L-tyrosine + ATP = L-tyrosyl-tRNA(Tyr) + AMP + diphosphate + H(+). In terms of biological role, catalyzes the attachment of tyrosine to tRNA(Tyr) in a two-step reaction: tyrosine is first activated by ATP to form Tyr-AMP and then transferred to the acceptor end of tRNA(Tyr). In Vibrio parahaemolyticus serotype O3:K6 (strain RIMD 2210633), this protein is Tyrosine--tRNA ligase 2.